Reading from the N-terminus, the 844-residue chain is Fe(2+) transport protein A/Fe(2+) transporter FeoB fusion protein (844 aa).

A feoA region spans residues 1–73; sequence MRLSELHTGD…EDAAKIEVEL (73 aa). Positions 74–844 are feoB; it reads ISSNATSSPA…LIYRIGILFF (771 aa). A compositionally biased stretch (polar residues) spans 79–106; that stretch reads TSSPASNDIGEQSANPDSNESIPTNPTE. Residues 79–110 form a disordered region; the sequence is TSSPASNDIGEQSANPDSNESIPTNPTEDISA. The region spanning 126–289 is the FeoB-type G domain; the sequence is VIRVALIGNP…FDTLISIHEG (164 aa). Residues 133–140, 158–162, 179–182, 240–243, and 269–271 each bind GTP; these read GNPNCGKT, GVTVE, DLPG, NMFD, and VGR. Helical transmembrane passes span 418–438, 475–495, 520–540, 559–579, 581–601, 646–666, 786–806, and 817–837; these read VLGFPLFLLFMFIMFEATFVL, IGGVGGVIVFLPNILILYFFI, LHGKSFIPLIMGFGCNVPAIM, PLMSCSARLPVYLLLAGAFFP, SAGLVLFGLYFLGILLAVLLA, MGSIILLASIVIWFLSYYPRY, IIALALMAFVLIYFPCIATVV, and WAVFSIIYSCSLAWIVSFLIY.

This sequence in the N-terminal section; belongs to the FeoA family. The protein in the C-terminal section; belongs to the TRAFAC class TrmE-Era-EngA-EngB-Septin-like GTPase superfamily. FeoB GTPase (TC 9.A.8) family.

It is found in the cell inner membrane. Probable transporter of a GTP-driven Fe(2+) uptake system. This is Fe(2+) transport protein A/Fe(2+) transporter FeoB fusion protein from Porphyromonas gingivalis (strain ATCC BAA-308 / W83).